Here is a 450-residue protein sequence, read N- to C-terminus: Tubulin beta-3 chain (450 aa).

Positions 1–4 (MREI) match the MREI motif motif. GDP is bound by residues Gly-10, Gln-11, Cys-12, and Gln-15. Gln-11 is a GTP binding site. Glu-69 is a binding site for GTP. Mg(2+) is bound at residue Glu-69. Residues Asn-99, Ser-138, Gly-142, Thr-143, and Gly-144 each coordinate GDP. Residues Ser-138, Gly-142, Thr-143, and Gly-144 each coordinate GTP. A Phosphoserine; by CDK1 modification is found at Ser-172. 4 residues coordinate GDP: Asp-177, Asn-204, Tyr-222, and Asn-226. Residue Asn-204 coordinates GTP. Asn-226 is a GTP binding site. The segment at 425–450 (YQDATAEEEGEMYEDDEEESEAQGPK) is disordered. The segment covering 429 to 450 (TAEEEGEMYEDDEEESEAQGPK) has biased composition (acidic residues). Glu-438 is modified (5-glutamyl polyglutamate). At Ser-444 the chain carries Phosphoserine.

It belongs to the tubulin family. As to quaternary structure, heterodimer of alpha- and beta-tubulin. A typical microtubule is a hollow water-filled tube with an outer diameter of 25 nm and an inner diameter of 15 nM. Alpha-beta heterodimers associate head-to-tail to form protofilaments running lengthwise along the microtubule wall with the beta-tubulin subunit facing the microtubule plus end conferring a structural polarity. Microtubules usually have 13 protofilaments but different protofilament numbers can be found in some organisms and specialized cells. Interacts with gamma-tubulin; the interaction allows microtubules to nucleate from the gamma-tubulin ring complex (gTuRC). Interacts with UNC5C (via cytoplasmic domain); this interaction is decreased by NTN1/Netrin-1. Interacts with NLRP5/MATER at cytoskeleton microtubules. Interacts with DPYSL5. Interacts with CFAP61. The cofactor is Mg(2+). Post-translationally, some glutamate residues at the C-terminus are polyglutamylated, resulting in polyglutamate chains on the gamma-carboxyl group. Polyglutamylation plays a key role in microtubule severing by spastin (SPAST). SPAST preferentially recognizes and acts on microtubules decorated with short polyglutamate tails: severing activity by SPAST increases as the number of glutamates per tubulin rises from one to eight, but decreases beyond this glutamylation threshold. Glutamylation is also involved in cilia motility. Some glutamate residues at the C-terminus are monoglycylated but not polyglycylated due to the absence of functional TTLL10 in human. Monoglycylation is mainly limited to tubulin incorporated into cilia and flagella axonemes, which is required for their stability and maintenance. Flagella glycylation controls sperm motility. Both polyglutamylation and monoglycylation can coexist on the same protein on adjacent residues, and lowering glycylation levels increases polyglutamylation, and reciprocally. In terms of processing, phosphorylated on Ser-172 by CDK1 during the cell cycle, from metaphase to telophase, but not in interphase. This phosphorylation inhibits tubulin incorporation into microtubules. In terms of tissue distribution, expression is primarily restricted to central and peripheral nervous system. Greatly increased expression in most cancerous tissues.

The protein resides in the cytoplasm. Its subcellular location is the cytoskeleton. It is found in the cell projection. It localises to the growth cone. The protein localises to the lamellipodium. The protein resides in the filopodium. Tubulin is the major constituent of microtubules, protein filaments consisting of alpha- and beta-tubulin heterodimers. Microtubules grow by the addition of GTP-tubulin dimers to the microtubule end, where a stabilizing cap forms. Below the cap, alpha-beta tubulin heterodimers are in GDP-bound state, owing to GTPase activity of alpha-tubulin. TUBB3 plays a critical role in proper axon guidance and maintenance. Binding of NTN1/Netrin-1 to its receptor UNC5C might cause dissociation of UNC5C from polymerized TUBB3 in microtubules and thereby lead to increased microtubule dynamics and axon repulsion. Plays a role in dorsal root ganglion axon projection towards the spinal cord. This Homo sapiens (Human) protein is Tubulin beta-3 chain (TUBB3).